The chain runs to 521 residues: GMP synthase [glutamine-hydrolyzing] (521 aa).

The Glutamine amidotransferase type-1 domain occupies 9 to 203; that stretch reads KILILDFGSQ…VSDICQCKKN (195 aa). The active-site Nucleophile is Cys86. Residues His177 and Glu179 contribute to the active site. Residues 204 to 396 form the GMPS ATP-PPase domain; sequence WTTDNIITKL…LGLPTHMLNC (193 aa). Position 231–237 (231–237) interacts with ATP; the sequence is SGGVDSS.

In terms of assembly, homodimer.

It carries out the reaction XMP + L-glutamine + ATP + H2O = GMP + L-glutamate + AMP + diphosphate + 2 H(+). The protein operates within purine metabolism; GMP biosynthesis; GMP from XMP (L-Gln route): step 1/1. Catalyzes the synthesis of GMP from XMP. In Vesicomyosocius okutanii subsp. Calyptogena okutanii (strain HA), this protein is GMP synthase [glutamine-hydrolyzing].